A 198-amino-acid polypeptide reads, in one-letter code: Na(+)-translocating NADH-quinone reductase subunit E (198 aa).

The next 6 helical transmembrane spans lie at 11 to 31 (SIFI…FLAV), 35 to 55 (VSTA…AVPA), 77 to 97 (FLNF…LEMI), 110 to 130 (GIFL…SFMV), 140 to 160 (VVYG…LAGI), and 176 to 196 (LGIT…FSGI).

This sequence belongs to the NqrDE/RnfAE family. As to quaternary structure, composed of six subunits; NqrA, NqrB, NqrC, NqrD, NqrE and NqrF.

The protein localises to the cell inner membrane. The enzyme catalyses a ubiquinone + n Na(+)(in) + NADH + H(+) = a ubiquinol + n Na(+)(out) + NAD(+). In terms of biological role, NQR complex catalyzes the reduction of ubiquinone-1 to ubiquinol by two successive reactions, coupled with the transport of Na(+) ions from the cytoplasm to the periplasm. NqrA to NqrE are probably involved in the second step, the conversion of ubisemiquinone to ubiquinol. The polypeptide is Na(+)-translocating NADH-quinone reductase subunit E (Glaesserella parasuis serovar 5 (strain SH0165) (Haemophilus parasuis)).